The chain runs to 270 residues: Putative phosphoenolpyruvate synthase regulatory protein (270 aa).

150 to 157 (GVSRCGKT) lines the ADP pocket.

Belongs to the pyruvate, phosphate/water dikinase regulatory protein family. PSRP subfamily.

It catalyses the reaction [pyruvate, water dikinase] + ADP = [pyruvate, water dikinase]-phosphate + AMP + H(+). The enzyme catalyses [pyruvate, water dikinase]-phosphate + phosphate + H(+) = [pyruvate, water dikinase] + diphosphate. Bifunctional serine/threonine kinase and phosphorylase involved in the regulation of the phosphoenolpyruvate synthase (PEPS) by catalyzing its phosphorylation/dephosphorylation. The polypeptide is Putative phosphoenolpyruvate synthase regulatory protein (Shewanella amazonensis (strain ATCC BAA-1098 / SB2B)).